A 354-amino-acid chain; its full sequence is MLVLGIESSCDETGVALYDTERGLRAHCLHTQMAMHAEYGGVVPELASRDHIRRLVPLTEGCLAQAGASYGDIDAVAFTQGPGLGGALLAGSSYANALAFALDKPVIPVHHLEGHLLSPLLAEEKPDFPFVALLVSGGHTQIMAVRGIGDYALLGESVDDAAGEAFDKTAKLLGLPYPGGAKLSELAESGRPEAFVFPRPMIHSDDLQMSFSGLKTAVLTAVEKVRAENGADDIPEQTRNDICRAFQDAVVDVLAAKVKKALLQTGFRTVVVAGGVGANRKLRETFGNMTVQIPTPKGKPKHPSEKVSVFFPPTAYCTDNGAMIAFAGAMHLKTGREAGAFNVRPRWPLSEIVK.

H111 and H115 together coordinate Fe cation. Substrate-binding positions include 134–138, D167, G180, and N279; that span reads LVSGG. D319 is a Fe cation binding site.

The protein belongs to the KAE1 / TsaD family. Fe(2+) serves as cofactor.

The protein localises to the cytoplasm. It catalyses the reaction L-threonylcarbamoyladenylate + adenosine(37) in tRNA = N(6)-L-threonylcarbamoyladenosine(37) in tRNA + AMP + H(+). Its function is as follows. Required for the formation of a threonylcarbamoyl group on adenosine at position 37 (t(6)A37) in tRNAs that read codons beginning with adenine. Is involved in the transfer of the threonylcarbamoyl moiety of threonylcarbamoyl-AMP (TC-AMP) to the N6 group of A37, together with TsaE and TsaB. TsaD likely plays a direct catalytic role in this reaction. The polypeptide is tRNA N6-adenosine threonylcarbamoyltransferase (Neisseria meningitidis serogroup C / serotype 2a (strain ATCC 700532 / DSM 15464 / FAM18)).